A 185-amino-acid chain; its full sequence is Class I hydrophobin SC6 (185 aa).

The first 17 residues, 1–17 (MVSRVLALISVAMLVGA), serve as a signal peptide directing secretion. Residues 70–104 (HIPEVTGSSTEEATSSSTWSGASSKPTDSAPTQCN) form a disordered region. The span at 75 to 93 (TGSSTEEATSSSTWSGASS) shows a compositional bias: low complexity. Polar residues predominate over residues 94 to 104 (KPTDSAPTQCN). 4 cysteine pairs are disulfide-bonded: C103–C164, C110–C158, C111–C144, and C165–C178.

The protein belongs to the fungal hydrophobin family. In terms of assembly, self-assembles to form functional amyloid fibrils called rodlets. Self-assembly into fibrillar rodlets occurs spontaneously at hydrophobic:hydrophilic interfaces and the rodlets further associate laterally to form amphipathic monolayers.

The protein localises to the secreted. The protein resides in the cell wall. Aerial growth, conidiation, and dispersal of filamentous fungi in the environment rely upon a capability of their secreting small amphipathic proteins called hydrophobins (HPBs) with low sequence identity. Class I can self-assemble into an outermost layer of rodlet bundles on aerial cell surfaces, conferring cellular hydrophobicity that supports fungal growth, development and dispersal; whereas Class II form highly ordered films at water-air interfaces through intermolecular interactions but contribute nothing to the rodlet structure. SC6 is a dikaryon-specific class I hydrophobin that contributes to the formation of aerial hyphae and fruiting bodies. This chain is Class I hydrophobin SC6, found in Schizophyllum commune (Split gill fungus).